The sequence spans 270 residues: Formamidopyrimidine-DNA glycosylase (270 aa).

The active-site Schiff-base intermediate with DNA is the P2. E3 (proton donor) is an active-site residue. The active-site Proton donor; for beta-elimination activity is K58. 3 residues coordinate DNA: H91, R110, and K151. An FPG-type zinc finger spans residues 236-270 (FVYGRGGEACKVCGTELRNVVLGQRASVFCPRCQR). The Proton donor; for delta-elimination activity role is filled by R260.

It belongs to the FPG family. As to quaternary structure, monomer. Zn(2+) serves as cofactor.

It catalyses the reaction Hydrolysis of DNA containing ring-opened 7-methylguanine residues, releasing 2,6-diamino-4-hydroxy-5-(N-methyl)formamidopyrimidine.. The enzyme catalyses 2'-deoxyribonucleotide-(2'-deoxyribose 5'-phosphate)-2'-deoxyribonucleotide-DNA = a 3'-end 2'-deoxyribonucleotide-(2,3-dehydro-2,3-deoxyribose 5'-phosphate)-DNA + a 5'-end 5'-phospho-2'-deoxyribonucleoside-DNA + H(+). In terms of biological role, involved in base excision repair of DNA damaged by oxidation or by mutagenic agents. Acts as a DNA glycosylase that recognizes and removes damaged bases. Has a preference for oxidized purines, such as 7,8-dihydro-8-oxoguanine (8-oxoG). Has AP (apurinic/apyrimidinic) lyase activity and introduces nicks in the DNA strand. Cleaves the DNA backbone by beta-delta elimination to generate a single-strand break at the site of the removed base with both 3'- and 5'-phosphates. This Pseudomonas fluorescens (strain SBW25) protein is Formamidopyrimidine-DNA glycosylase.